The following is a 1675-amino-acid chain: Clathrin heavy chain 1 (1675 aa).

An N-acetylalanine modification is found at Ala2. The segment at 2 to 479 is globular terminal domain; it reads AQILPIRFQE…VDPTLALSVY (478 aa). WD40-like repeat stretches follow at residues 24–67, 68–107, 108–149, 150–195, 196–257, 258–301, and 302–330; these read NIGF…RPIS, ADSAIMNPASKVIALKAGKTLQIFNIEMKSKMKAHTMTDD, VTFW…SSLA, GCQI…QPIE, GHAA…PEAQ, NDFP…ISGE, and TIFVTAPHEATAGIIGVNRKGQVLSVCVE. Ser67 bears the Phosphoserine mark. Residue Thr105 is modified to Phosphothreonine. Tyr184 carries the post-translational modification Phosphotyrosine. Thr394 bears the Phosphothreonine mark. A binding site for the uncoating ATPase, involved in lattice disassembly region spans residues 449-465; it reads EKWLKEDKLECSEELGD. The interval 480-523 is flexible linker; it reads LRANVPNKVIQCFAETGQVQKIVLYAKKVGYTPDWIFLLRNVMR. Residues 524 to 634 are distal segment; sequence ISPDQGQQFA…RALEHFTDLY (111 aa). Positions 524–1675 are heavy chain arm; sequence ISPDQGQQFA…QPQPGFGYSM (1152 aa). CHCR repeat units lie at residues 537–683, 686–828, 833–972, 979–1124, 1128–1269, 1274–1420, and 1423–1566; these read VQDE…QICV, ASKY…SEDV, ILVV…PLID, LSET…VKEA, YIKA…FRLA, LHIV…LLLN, and LMVL…RECF. Tyr634 is subject to Phosphotyrosine. Residues 639 to 1675 are proximal segment; it reads AVVHTHLLNP…QPQPGFGYSM (1037 aa). Residue Lys737 is modified to N6-succinyllysine. An N6-acetyllysine modification is found at Lys856. At Tyr899 the chain carries Phosphotyrosine. Ser1167 carries the post-translational modification Phosphoserine. Tyr1206 carries the post-translational modification Phosphotyrosine. Residues 1213–1522 are involved in binding clathrin light chain; the sequence is AAKLLYNNVS…YLFKGNNRWK (310 aa). At Ser1229 the chain carries Phosphoserine. Lys1441 is modified (N6-acetyllysine; alternate). N6-succinyllysine; alternate is present on Lys1441. Phosphotyrosine is present on residues Tyr1477 and Tyr1487. Ser1494 is modified (phosphoserine). Lys1501 is modified (N6-acetyllysine). Positions 1550-1675 are trimerization; sequence AEELLQWFLQ…QPQPGFGYSM (126 aa).

The protein belongs to the clathrin heavy chain family. As to quaternary structure, clathrin triskelions, composed of 3 heavy chains and 3 light chains, are the basic subunits of the clathrin coat. In the presence of light chains, hub assembly is influenced by both the pH and the concentration of calcium. Interacts with HIP1. Interacts with DENND1A, DENND1B and DENND1C. Interacts with ERBB2. Interacts with FKBP6. Interacts with OCRL. Interacts with CKAP5 and TACC3 forming the TACC3/ch-TOG/clathrin complex located at spindle inter-microtubules bridges; the complex implicates clathrin triskelions; TACC3 and CLTC are proposed to form a composite microtubule interaction surface. Plays a role in early autophagosome formation. Interacts with ATG16L1 (via N-terminus). Interacts with RFTN1; the interaction occurs in response to pathogens. Interacts with USP2 isoform 2. Interacts with TMEM106B (via N-terminus). Interacts with DNAJC6; this interaction produces a local change in heavy-chain contacts, creating a detectable global distortion of the clathrin coat and leads to the recruitment of HSPA8.

Its subcellular location is the cytoplasmic vesicle membrane. It is found in the membrane. It localises to the coated pit. The protein resides in the melanosome. The protein localises to the cytoplasm. Its subcellular location is the cytoskeleton. It is found in the spindle. Its function is as follows. Clathrin is the major protein of the polyhedral coat of coated pits and vesicles. Two different adapter protein complexes link the clathrin lattice either to the plasma membrane or to the trans-Golgi network. Acts as a component of the TACC3/ch-TOG/clathrin complex proposed to contribute to stabilization of kinetochore fibers of the mitotic spindle by acting as inter-microtubule bridge. The TACC3/ch-TOG/clathrin complex is required for the maintenance of kinetochore fiber tension. Plays a role in early autophagosome formation. Interaction with DNAJC6 mediates the recruitment of HSPA8 to the clathrin lattice and creates local destabilization of the lattice promoting uncoating. The protein is Clathrin heavy chain 1 of Mus musculus (Mouse).